The sequence spans 682 residues: Potassium-transporting ATPase ATP-binding subunit (682 aa).

Helical transmembrane passes span 35 to 55 (VMFI…AMAG), 62 to 82 (ATFT…ANFA), 219 to 239 (IALT…TATI), and 254 to 274 (VLVA…LSAI). D307 acts as the 4-aspartylphosphate intermediate in catalysis. Residues D344, E348, 377–384 (FTAQTRMS), and K395 contribute to the ATP site. The Mg(2+) site is built by D518 and D522. The next 3 membrane-spanning stretches (helical) occupy residues 588 to 608 (FAII…LNVM), 616 to 636 (AILS…PLAL), and 656 to 676 (IYGL…DLLL).

The protein belongs to the cation transport ATPase (P-type) (TC 3.A.3) family. Type IA subfamily. The system is composed of three essential subunits: KdpA, KdpB and KdpC.

It localises to the cell inner membrane. It catalyses the reaction K(+)(out) + ATP + H2O = K(+)(in) + ADP + phosphate + H(+). Part of the high-affinity ATP-driven potassium transport (or Kdp) system, which catalyzes the hydrolysis of ATP coupled with the electrogenic transport of potassium into the cytoplasm. This subunit is responsible for energy coupling to the transport system and for the release of the potassium ions to the cytoplasm. The chain is Potassium-transporting ATPase ATP-binding subunit from Klebsiella pneumoniae subsp. pneumoniae (strain ATCC 700721 / MGH 78578).